The chain runs to 243 residues: Ribonuclease PH (243 aa).

Phosphate contacts are provided by residues Arg91 and 129-131; that span reads GTR.

The protein belongs to the RNase PH family. As to quaternary structure, homohexameric ring arranged as a trimer of dimers.

The catalysed reaction is tRNA(n+1) + phosphate = tRNA(n) + a ribonucleoside 5'-diphosphate. Its function is as follows. Phosphorolytic 3'-5' exoribonuclease that plays an important role in tRNA 3'-end maturation. Removes nucleotide residues following the 3'-CCA terminus of tRNAs; can also add nucleotides to the ends of RNA molecules by using nucleoside diphosphates as substrates, but this may not be physiologically important. Probably plays a role in initiation of 16S rRNA degradation (leading to ribosome degradation) during starvation. This Burkholderia thailandensis (strain ATCC 700388 / DSM 13276 / CCUG 48851 / CIP 106301 / E264) protein is Ribonuclease PH.